Consider the following 335-residue polypeptide: Dihydroorotate dehydrogenase (quinone) (335 aa).

Residues 58 to 62 (AGADK) and Thr-82 each bind FMN. Residue Lys-62 coordinates substrate. 107-111 (NRNGF) provides a ligand contact to substrate. Residues Asn-135 and Asn-168 each coordinate FMN. Substrate is bound at residue Asn-168. The active-site Nucleophile is Ser-171. Asn-173 provides a ligand contact to substrate. FMN contacts are provided by Lys-213 and Gly-241. 242–243 (NT) contacts substrate. FMN is bound by residues Gly-264, Gly-293, and 314–315 (YS).

This sequence belongs to the dihydroorotate dehydrogenase family. Type 2 subfamily. Monomer. Requires FMN as cofactor.

The protein resides in the cell membrane. The enzyme catalyses (S)-dihydroorotate + a quinone = orotate + a quinol. It functions in the pathway pyrimidine metabolism; UMP biosynthesis via de novo pathway; orotate from (S)-dihydroorotate (quinone route): step 1/1. Catalyzes the conversion of dihydroorotate to orotate with quinone as electron acceptor. The polypeptide is Dihydroorotate dehydrogenase (quinone) (Haemophilus ducreyi (strain 35000HP / ATCC 700724)).